The following is a 202-amino-acid chain: Putative pre-16S rRNA nuclease (202 aa).

2 disordered regions span residues Met1–Ile27 and Gly170–Arg202. The segment covering Gly9–Asp20 has biased composition (basic and acidic residues).

The protein belongs to the YqgF nuclease family.

The protein localises to the cytoplasm. In terms of biological role, could be a nuclease involved in processing of the 5'-end of pre-16S rRNA. In Frankia casuarinae (strain DSM 45818 / CECT 9043 / HFP020203 / CcI3), this protein is Putative pre-16S rRNA nuclease.